The chain runs to 388 residues: 3-amino-5-hydroxybenzoate synthase (388 aa).

Lys188 bears the N6-(pyridoxal phosphate)lysine mark.

This sequence belongs to the degT/dnrJ/eryC1 family. In terms of assembly, homodimer. Can interact with RifL. Pyridoxal 5'-phosphate is required as a cofactor.

It catalyses the reaction 5-deoxy-5-amino-3-dehydroshikimate = 3-amino-5-hydroxybenzoate + H2O + H(+). The enzyme catalyses UDP-3-oxo-alpha-D-glucose + L-glutamine = UDP-alpha-D-kanosamine + 2-oxoglutaramate. Its pathway is antibiotic biosynthesis; rifamycin B biosynthesis. With respect to regulation, AHBA synthase activity is activated by 3-deoxy-D-arabinoheptulosonic acid 7-phosphate (DAHP), an intermediate in the shikimate pathway, and is irreversibly inhibited by gabaculine (5-amino-1,3-cyclohexadiene-1-carboxylate). In terms of biological role, catalyzes the dehydration and aromatization of 5-amino-5-deoxy-3-dehydroshikimate (aminoDHS) to 3-amino-5-hydroxybenzoate (AHBA), a compound that then serves as the starter unit for the assembly of a polyketide during the biosynthesis of rifamycin B and other ansamycin antibiotics. Cannot utilize 5-deoxy-5-amino-3-dehydroquinate (aminoDHQ), 5-deoxy-5-aminoshikimate (aminoSA), quinate, 3-dehydroquinate, or 3-dehydroshikimate (DHS) as substrate. Its function is as follows. In a complex with RifL, RifK may have a second function in the AHBA pathway, acting as a transaminase introducing the nitrogen into the first pathway intermediate, UDP-3-keto-D-glucose, to give UDP-kanosamine. Appears to use glutamine as the nitrogen donor; NH(4)(+) or asparagine are 30% less effective as nitrogen donors and neither glutamate nor aspartate show activity. This Amycolatopsis mediterranei (strain S699) (Nocardia mediterranei) protein is 3-amino-5-hydroxybenzoate synthase (rifK).